We begin with the raw amino-acid sequence, 318 residues long: MSSSASLSSSASLQRVVVLVGPTATGKSVLAVRLAQRFNAEVVNADSMQVYRGMDIGTAKLPPAERDGVAHHVLDVWPVTKTASVAEYQHLARAAIEEIGRRGRLPILVGGSGLYVRAAVDRLEFPGTDPAIRARLEAELAAHGPEALHARLARLDPQAAERILPTNGRRIVRALEVLQLGRPRFAAELPEYASVYDALFLGLDLATPELDDRVERRVAAMWQAGFVDEVRHLAEDCGLREGRTASRALGYRQVLTMLDGGCDEAEARRRTVDATKRFVRRQRSWFRPDPRIHWLDAADAALETAAARTIEGWMTSRS.

21 to 28 (GPTATGKS) contributes to the ATP binding site. Residue 23 to 28 (TATGKS) coordinates substrate. Positions 46-49 (DSMQ) are interaction with substrate tRNA.

This sequence belongs to the IPP transferase family. In terms of assembly, monomer. Requires Mg(2+) as cofactor.

The enzyme catalyses adenosine(37) in tRNA + dimethylallyl diphosphate = N(6)-dimethylallyladenosine(37) in tRNA + diphosphate. Its function is as follows. Catalyzes the transfer of a dimethylallyl group onto the adenine at position 37 in tRNAs that read codons beginning with uridine, leading to the formation of N6-(dimethylallyl)adenosine (i(6)A). This Acidothermus cellulolyticus (strain ATCC 43068 / DSM 8971 / 11B) protein is tRNA dimethylallyltransferase.